We begin with the raw amino-acid sequence, 40 residues long: Photosystem II reaction center protein Y (40 aa).

A helical transmembrane segment spans residues 5-23 (LIVVLAPILLAGGWAVFNI).

Belongs to the PsbY family. PSII is composed of 1 copy each of membrane proteins PsbA, PsbB, PsbC, PsbD, PsbE, PsbF, PsbH, PsbI, PsbJ, PsbK, PsbL, PsbM, PsbT, PsbX, PsbY, PsbZ, Psb30/Ycf12, peripheral proteins PsbO, CyanoQ (PsbQ), PsbU, PsbV and a large number of cofactors. It forms dimeric complexes.

It is found in the cellular thylakoid membrane. Functionally, loosely associated component of the core of photosystem II (PSII), it is not always seen in crystals. PSII is a light-driven water plastoquinone oxidoreductase, using light energy to abstract electrons from H(2)O, generating a proton gradient subsequently used for ATP formation. The protein is Photosystem II reaction center protein Y of Synechococcus elongatus (strain ATCC 33912 / PCC 7942 / FACHB-805) (Anacystis nidulans R2).